The chain runs to 64 residues: Metallothionein-like protein 1 (64 aa).

It belongs to the metallothionein superfamily. Type 15 family.

Functionally, metallothioneins have a high content of cysteine residues that bind various heavy metals. The polypeptide is Metallothionein-like protein 1 (MT1) (Prunus avium (Cherry)).